Reading from the N-terminus, the 67-residue chain is Large ribosomal subunit protein bL35 (67 aa).

This sequence belongs to the bacterial ribosomal protein bL35 family.

This chain is Large ribosomal subunit protein bL35, found in Rhizobium johnstonii (strain DSM 114642 / LMG 32736 / 3841) (Rhizobium leguminosarum bv. viciae).